We begin with the raw amino-acid sequence, 201 residues long: Recombination protein RecR (201 aa).

The C4-type zinc finger occupies 60–75 (CSRCGNVDTVDPCTVC). One can recognise a Toprim domain in the interval 83 to 178 (SVIIVVEDVS…KITRLAHGVP (96 aa)).

The protein belongs to the RecR family.

Its function is as follows. May play a role in DNA repair. It seems to be involved in an RecBC-independent recombinational process of DNA repair. It may act with RecF and RecO. The polypeptide is Recombination protein RecR (Rhizobium etli (strain CIAT 652)).